Consider the following 331-residue polypeptide: Glyceraldehyde-3-phosphate dehydrogenase 3 (331 aa).

Residues 11-12, aspartate 33, and glutamate 77 contribute to the NAD(+) site; that span reads RI. Serine 148 is subject to Phosphoserine. A D-glyceraldehyde 3-phosphate-binding site is contributed by 148 to 150; sequence SCT. Catalysis depends on cysteine 149, which acts as the Nucleophile. Position 177 is a phosphoserine (serine 177). Threonine 179 contacts D-glyceraldehyde 3-phosphate. Serine 200 carries the phosphoserine modification. Residues 208-209 and arginine 231 contribute to the D-glyceraldehyde 3-phosphate site; that span reads TG. Position 313 (asparagine 313) interacts with NAD(+).

This sequence belongs to the glyceraldehyde-3-phosphate dehydrogenase family. As to quaternary structure, homotetramer.

It is found in the cytoplasm. It carries out the reaction D-glyceraldehyde 3-phosphate + phosphate + NAD(+) = (2R)-3-phospho-glyceroyl phosphate + NADH + H(+). It functions in the pathway carbohydrate degradation; glycolysis; pyruvate from D-glyceraldehyde 3-phosphate: step 1/5. The protein is Glyceraldehyde-3-phosphate dehydrogenase 3 of Kluyveromyces marxianus (Yeast).